The following is a 314-amino-acid chain: Homoserine kinase (314 aa).

96–106 (PIGSGLGSSAC) lines the ATP pocket.

This sequence belongs to the GHMP kinase family. Homoserine kinase subfamily.

The protein resides in the cytoplasm. It carries out the reaction L-homoserine + ATP = O-phospho-L-homoserine + ADP + H(+). It functions in the pathway amino-acid biosynthesis; L-threonine biosynthesis; L-threonine from L-aspartate: step 4/5. Functionally, catalyzes the ATP-dependent phosphorylation of L-homoserine to L-homoserine phosphate. The protein is Homoserine kinase of Haemophilus influenzae (strain PittEE).